The sequence spans 172 residues: Inorganic pyrophosphatase (172 aa).

Substrate contacts are provided by Lys-29, Arg-43, and Tyr-55. 3 residues coordinate Mg(2+): Asp-65, Asp-70, and Asp-102. Substrate is bound at residue Tyr-141.

It belongs to the PPase family. As to quaternary structure, homohexamer. Mg(2+) is required as a cofactor.

Its subcellular location is the cytoplasm. It catalyses the reaction diphosphate + H2O = 2 phosphate + H(+). Functionally, catalyzes the hydrolysis of inorganic pyrophosphate (PPi) forming two phosphate ions. The polypeptide is Inorganic pyrophosphatase (Rickettsia prowazekii (strain Madrid E)).